Consider the following 279-residue polypeptide: Tryptophan synthase alpha chain (279 aa).

Residues E50 and D61 each act as proton acceptor in the active site.

This sequence belongs to the TrpA family. In terms of assembly, tetramer of two alpha and two beta chains.

The enzyme catalyses (1S,2R)-1-C-(indol-3-yl)glycerol 3-phosphate + L-serine = D-glyceraldehyde 3-phosphate + L-tryptophan + H2O. It participates in amino-acid biosynthesis; L-tryptophan biosynthesis; L-tryptophan from chorismate: step 5/5. Functionally, the alpha subunit is responsible for the aldol cleavage of indoleglycerol phosphate to indole and glyceraldehyde 3-phosphate. This Rhizobium rhizogenes (strain K84 / ATCC BAA-868) (Agrobacterium radiobacter) protein is Tryptophan synthase alpha chain.